The chain runs to 321 residues: Malate dehydrogenase (321 aa).

Residues 10–15 and Asp34 contribute to the NAD(+) site; that span reads GAGQIG. Arg83 and Arg89 together coordinate substrate. NAD(+) is bound by residues Asn96 and 119–121; that span reads ITN. Substrate is bound by residues Asn121 and Arg152. Residue His176 is the Proton acceptor of the active site.

The protein belongs to the LDH/MDH superfamily. MDH type 3 family.

The enzyme catalyses (S)-malate + NAD(+) = oxaloacetate + NADH + H(+). Its function is as follows. Catalyzes the reversible oxidation of malate to oxaloacetate. This chain is Malate dehydrogenase, found in Methylocella silvestris (strain DSM 15510 / CIP 108128 / LMG 27833 / NCIMB 13906 / BL2).